The following is a 236-amino-acid chain: MVSSLANELREGTTKSHSMAENVSFVKSFLGGVVDKKSYRKLIANLYFVYSAIEEEILLNKDHPAIKPIYFTELNRKTSLAKDLNYYYGPDWLNIIEPSSATQVYVNRIHNIGNKQPELLVAHAYTRYLGDLSGGQVLKKIARGAMNLSDERGTKFYDFDEIEDDKIFKNNYRSALDTIPLSDEQVQNVVAEANISFTLNMKMFEELNSSIVKIITMIIVSTVRKFTLKSILATAD.

Residue H17 participates in heme b binding.

Belongs to the heme oxygenase family.

It localises to the plastid. The protein resides in the chloroplast. The catalysed reaction is heme b + 3 reduced [NADPH--hemoprotein reductase] + 3 O2 = biliverdin IXalpha + CO + Fe(2+) + 3 oxidized [NADPH--hemoprotein reductase] + 3 H2O + H(+). Functionally, catalyzes the opening of the heme ring with the release of iron. Key enzyme in the synthesis of the chromophoric part of the photosynthetic antennae. In Porphyra purpurea (Red seaweed), this protein is Heme oxygenase (pbsA).